A 149-amino-acid polypeptide reads, in one-letter code: Putative prefoldin subunit alpha (149 aa).

The protein belongs to the prefoldin subunit alpha family.

It is found in the cytoplasm. Functionally, molecular chaperone capable of stabilizing a range of proteins. This chain is Putative prefoldin subunit alpha, found in Aquifex aeolicus (strain VF5).